A 1285-amino-acid polypeptide reads, in one-letter code: Protein crumbs homolog 2 (1285 aa).

Residues 1–28 form the signal peptide; sequence MALARPGTPDPQALASVLLLLLWAPALS. Positions 1 to 350 are required for maximum inhibition of APP amyloid-beta peptide secretion; the sequence is MALARPGTPD…GFQCHCPDGY (350 aa). An EGF-like 1 domain is found at 67-106; the sequence is EPRGCATQPCHHGALCVPQGPDPTGFRCYCVPGFQGPRCE. 27 disulfides stabilise this stretch: Cys71/Cys82, Cys76/Cys94, Cys96/Cys105, Cys112/Cys123, Cys117/Cys132, Cys134/Cys143, Cys150/Cys161, Cys155/Cys170, Cys172/Cys181, Cys188/Cys199, Cys193/Cys208, Cys210/Cys220, Cys227/Cys238, Cys232/Cys247, Cys249/Cys258, Cys265/Cys276, Cys270/Cys306, Cys308/Cys317, Cys324/Cys335, Cys329/Cys344, Cys346/Cys355, Cys362/Cys373, Cys367/Cys382, Cys384/Cys393, Cys400/Cys411, Cys405/Cys424, and Cys426/Cys435. The region spanning 108–144 is the EGF-like 2; calcium-binding domain; sequence DIDECASRPCHHGATCRNLADRYECHCPLGYAGVTCE. One can recognise an EGF-like 3; calcium-binding domain in the interval 146–182; it reads EVDECASAPCLHGGSCLDGVGSFRCVCAPGYGGTRCQ. The region spanning 184–221 is the EGF-like 4; calcium-binding domain; the sequence is DLDECQSQPCAHGGTCHDLVNGFRCDCAGTGYEGTHCE. 2 consecutive EGF-like domains span residues 223–259 and 261–318; these read EVLE…ELCE and DEDE…ADCG. Asn235 is a glycosylation site (N-linked (GlcNAc...) asparagine). The O-linked (Glc...) serine glycan is linked to Ser267. The 37-residue stretch at 320–356 folds into the EGF-like 7; calcium-binding domain; it reads EVDECASRPCLNGGHCQDLPNGFQCHCPDGYAGPTCE. Residues 358–394 enclose the EGF-like 8; calcium-binding domain; sequence DVDECLSDPCLHGGTCSDTVAGYICRCPETWGGRDCS. The EGF-like 9 domain maps to 396–436; sequence QLTGCQGHTCPLAATCIPIFESGVHSYVCHCPPGTHGPFCG. Residues 431-603 form the Laminin G-like 1 domain; sequence HGPFCGQNTT…DLGENVLLGC (173 aa). 2 N-linked (GlcNAc...) asparagine glycosylation sites follow: Asn438 and Asn478. Cystine bridges form between Cys579–Cys603, Cys609–Cys620, Cys614–Cys629, and Cys631–Cys640. Residues 605–641 enclose the EGF-like 10 domain; sequence RREQCRPLPCVHGGSCVDLWTHFRCDCARPHRGPTCA. The Laminin G-like 2 domain maps to 647 to 805; that stretch reads ATFGLGGAPS…RQSWNLTAGC (159 aa). Asn669, Asn690, Asn786, and Asn800 each carry an N-linked (GlcNAc...) asparagine glycan. Cystine bridges form between Cys766–Cys805, Cys811–Cys822, Cys816–Cys831, and Cys833–Cys842. The 37-residue stretch at 807–843 folds into the EGF-like 11 domain; that stretch reads SEDMCSPDPCFNGGTCLVTWNDFHCTCPANFTGPTCA. N-linked (GlcNAc...) asparagine glycans are attached at residues Asn836, Asn886, Asn926, and Asn1009. In terms of domain architecture, Laminin G-like 3 spans 871–1054; sequence EATFREGPPA…PGTPAPILGC (184 aa). Cystine bridges form between Cys1013-Cys1054, Cys1060-Cys1071, Cys1065-Cys1080, Cys1082-Cys1091, Cys1098-Cys1108, Cys1103-Cys1118, Cys1120-Cys1129, Cys1138-Cys1150, Cys1144-Cys1159, Cys1161-Cys1170, Cys1177-Cys1188, Cys1182-Cys1197, and Cys1199-Cys1208. EGF-like domains follow at residues 1056-1092, 1094-1130, 1134-1171, and 1173-1209; these read GAPV…PRCE, HVDP…PRCR, PSKE…QRCQ, and PTLP…QFCE. N-linked (GlcNAc...) asparagine glycosylation is found at Asn1141 and Asn1158. A helical membrane pass occupies residues 1225 to 1245; sequence VAVPAACACLLLLLLGLLSGI. The segment at 1249–1285 is interaction with EPB41L5; that stretch reads RKRRQSEGTYSPSQQEVAGARLEMDSVLKVPPEERLI.

Belongs to the Crumbs protein family. As to quaternary structure, associates with the gamma-secretase complex via interaction (via the transmembrane domain) with PSEN1/PS1. Interacts (via intracellular domain) with EPB41L5. Interacts with PALS1. O-glucosylated by POGLUT1 at Ser-267; consists of an O-glucose trisaccharide, in which the O-glucose is elongated by the addition of two xylose residues. O-glucosylation is required for localization at the plasma membrane. Post-translationally, N-glycosylated. Expressed in glomeruli, podocytes of the glomerular capillary loops, and parietal glomerular epithelial cells in the kidney (at protein level). Expressed in retina, fetal eye and brain. Also expressed in kidney, RPE/choroid, and at low levels in lung, placenta, and heart.

The protein resides in the apical cell membrane. It localises to the cytoplasm. It is found in the cell junction. Its subcellular location is the secreted. In terms of biological role, apical polarity protein that plays a central role during the epithelial-to-mesenchymal transition (EMT) at gastrulation, when newly specified mesodermal cells move inside the embryo. Acts by promoting cell ingression, the process by which cells leave the epithelial epiblast and move inside the embryo to form a new tissue layer. The anisotropic distribution of CRB2 and MYH10/myosin-IIB at cell edges define which cells will ingress: cells with high apical CRB2 are probably extruded from the epiblast by neighboring cells with high levels of apical MYH10/myosin-IIB. Plays a role in the maintenance of retinal neuroepithelium organization, structural integrity, adhesion, photoreceptor polarity and retinal photoreceptor layer thickness. May play a role in determining the length of cone photoreceptor outer segments and proliferation of late-born progenitor cells. Also required for maintenance of the apical polarity complex during development of the cortex. Inhibits gamma-secretase-dependent cleavage of APP and secretion of amyloid-beta peptide 40 and amyloid-beta peptide 42, and thereby inhibits gamma-secretase-dependent Notch transcription. In Homo sapiens (Human), this protein is Protein crumbs homolog 2.